A 776-amino-acid chain; its full sequence is MLNSARTVLARHSARQLYRFRGCLVHQQRHRHQVQRTLATHVQRHLPASLDDKALVALFDQPNGSKLRSPFNTTGLFGHPNLTHPRALVSLAESTLVRAQLLTQRILEAGKSEHELAKVVKNLDRLSDMLCGVIDLAELVRNAHPDRLWVEAANHAYETLCEFMNVLNTHTGLYEVLKQVLSNPTLVNSLSPEAYQTALIFWRDFEKSAIDLPPAQRNKFVSLSSDILVLGRQFLENASTPRPPTSIKASDLAGLKDKGMGVRLQLQAQFTNRDLQIYPGSLQAHMIMRSAPNEEPRRRLYLAANSSTQEQIEVLEALLKKRAELAQLVGRESFAHMTLDDKMAKTPDNVTNFLDALIDHTRPFARSALRTLAQRKQAHHGLSSLPIIQAWDRDFYCPPDPPAPPIPLPPLTLGTVFMGLSRLFRHLYGVSLRPVPSASGEVWHTDVQKLEVVDEDQGIIGWIYADLFARRGKASGAAHYTVRCSRRTDDDDEQGDGMFEGAELQILESQEFEAVKRHRLPNQEGVFQLPLVVLLCEFTRPTVSKGGTILEWHEVQTLFHEMGHAMHSMLGRTEYQNVSGTRCATDFVELPSILMEHFLNSPAVLSLFDADGTSTLRQIGNHHHDPCHAIDTYSQIMLAVVDQIYHSPTVLDPSFDSTREYGNLQNTRGLIPYVPGTSYQTQFGHLFGYGATYYSYLFDRAIASRVWSKVFSKDPLDRELGEKYKREVLRWGGARDPWEMVATLLDAPELAAGDAEAMREVGRWRIEDEVGVGGRH.

Residues 1 to 38 (MLNSARTVLARHSARQLYRFRGCLVHQQRHRHQVQRTL) constitute a mitochondrion transit peptide. Position 560 (His560) interacts with Zn(2+). Glu561 is an active-site residue. His564 and His567 together coordinate Zn(2+).

Belongs to the peptidase M3 family. Zn(2+) serves as cofactor.

It is found in the mitochondrion matrix. It catalyses the reaction Release of an N-terminal octapeptide as second stage of processing of some proteins imported into the mitochondrion.. Its function is as follows. Cleaves proteins, imported into the mitochondrion, to their mature size. While most mitochondrial precursor proteins are processed to the mature form in one step by mitochondrial processing peptidase (MPP), the sequential cleavage by MIP of an octapeptide after initial processing by MPP is a required step for a subgroup of nuclear-encoded precursor proteins destined for the matrix or the inner membrane. The protein is Mitochondrial intermediate peptidase (OCT1) of Coprinopsis cinerea (strain Okayama-7 / 130 / ATCC MYA-4618 / FGSC 9003) (Inky cap fungus).